We begin with the raw amino-acid sequence, 135 residues long: Glutaredoxin-C5 (135 aa).

Residues 29 to 134 (AERVERLASE…PLLKEAGALW (106 aa)) form the Glutaredoxin domain. Cys-49 and Cys-52 form a disulfide bridge. Positions 132 to 135 (ALWL) match the Responsive for interaction with TGA factors motif.

The protein belongs to the glutaredoxin family. CC-type subfamily.

It is found in the cytoplasm. The protein localises to the nucleus. In terms of biological role, has a glutathione-disulfide oxidoreductase activity in the presence of NADPH and glutathione reductase. Reduces low molecular weight disulfides and proteins. In Oryza sativa subsp. japonica (Rice), this protein is Glutaredoxin-C5 (GRXC5).